The sequence spans 121 residues: Fluoride-specific ion channel FluC 1 (121 aa).

4 helical membrane-spanning segments follow: residues 3–23 (YLYI…LSML), 29–49 (IPLG…SIGA), 67–87 (TGLL…VTLF), and 92–112 (FILF…SCYL). The Na(+) site is built by G71 and T74.

The protein belongs to the fluoride channel Fluc/FEX (TC 1.A.43) family.

Its subcellular location is the cell membrane. It catalyses the reaction fluoride(in) = fluoride(out). Na(+) is not transported, but it plays an essential structural role and its presence is essential for fluoride channel function. Functionally, fluoride-specific ion channel. Important for reducing fluoride concentration in the cell, thus reducing its toxicity. This chain is Fluoride-specific ion channel FluC 1, found in Staphylococcus epidermidis (strain ATCC 35984 / DSM 28319 / BCRC 17069 / CCUG 31568 / BM 3577 / RP62A).